The sequence spans 147 residues: Heavy metal-dependent transcription regulator 1 (147 aa).

One can recognise an HTH merR-type domain in the interval 1 to 70; sequence MNIGQASKVV…VEQIKDLLAL (70 aa). A DNA-binding region (H-T-H motif) is located at residues 3-22; it reads IGQASKVVSGVSSKMIRYYE.

The protein localises to the cytoplasm. Its function is as follows. Transcriptional regulator involved in acid tolerance. Binds copper. The polypeptide is Heavy metal-dependent transcription regulator 1 (hmrR1) (Rhizobium meliloti (strain 1021) (Ensifer meliloti)).